An 892-amino-acid polypeptide reads, in one-letter code: Nitrogen assimilation transcription factor nirA (892 aa).

Residues 1-32 (MGEKLDPELSSDGPHTKSSSKGQGTSTDNAPA) are disordered. Low complexity predominate over residues 16 to 27 (TKSSSKGQGTST). The zn(2)-C6 fungal-type DNA-binding region spans 42–70 (CIACRRRKSKCDGNLPSCAACSSVYHTTC). 3 disordered regions span residues 646–714 (GPWD…SGPV), 731–761 (AHNE…SAQE), and 842–892 (PNIP…SFQR). The span at 649 to 674 (DQAASPSTTSDSPPSVSSQSVVATTD) shows a compositional bias: low complexity. Composition is skewed to polar residues over residues 675–714 (LSQP…SGPV), 746–761 (VSTS…SAQE), and 876–892 (NVNS…SFQR).

It localises to the nucleus. Pathway-specific regulatory gene of nitrate assimilation; it activates the transcription of the genes for nitrate and nitrite reductases (niaD and niiA). In Emericella nidulans (strain FGSC A4 / ATCC 38163 / CBS 112.46 / NRRL 194 / M139) (Aspergillus nidulans), this protein is Nitrogen assimilation transcription factor nirA (nirA).